The sequence spans 145 residues: MYPAHLLLLLAVCVSLLGASAIPPLPLNLAQFALVIKCADKGKRPRWHYMDYGCYCGPGGSGTPIDELDRCCKTHDECYAQAEKKGCYPKLTMYSYYCGGDGPYCNSKTECQRFVCDCDVRAADCFARYPYNNKNYNINTSKRCK.

The N-terminal stretch at 1 to 21 (MYPAHLLLLLAVCVSLLGASA) is a signal peptide. A propeptide spanning residues 22-27 (IPPLPL) is cleaved from the precursor. 7 disulfides stabilise this stretch: Cys38–Cys98, Cys54–Cys144, Cys56–Cys72, Cys71–Cys125, Cys78–Cys118, Cys87–Cys111, and Cys105–Cys116. Residues Tyr55, Gly57, and Gly59 each coordinate Ca(2+). The active site involves His75. Position 76 (Asp76) interacts with Ca(2+). The active site involves Asp119.

This sequence belongs to the phospholipase A2 family. Group I subfamily. D49 sub-subfamily. It depends on Ca(2+) as a cofactor.

It is found in the secreted. It carries out the reaction a 1,2-diacyl-sn-glycero-3-phosphocholine + H2O = a 1-acyl-sn-glycero-3-phosphocholine + a fatty acid + H(+). In terms of biological role, PLA2 catalyzes the calcium-dependent hydrolysis of the 2-acyl groups in 3-sn-phosphoglycerides. This is Basic phospholipase A2 PC14 from Laticauda laticaudata (Blue-ringed sea krait).